The primary structure comprises 718 residues: Cyclomaltodextrin glucanotransferase (718 aa).

The N-terminal stretch at 1–34 is a signal peptide; the sequence is MFQMAKRAFLSTTLTLGLLAGSALPFLPASAAYA. The tract at residues 35–172 is A1; it reads DPDIAVTNKQ…GIKIIIDFAP (138 aa). Residues Asp-61, Asn-63, Asn-66, and Asn-67 each coordinate Ca(2+). Residues Cys-77 and Cys-84 are joined by a disulfide bond. Ca(2+) contacts are provided by Gly-85 and Asp-87. 134–135 is a binding site for substrate; that stretch reads YW. Residue Asn-173 participates in Ca(2+) binding. A b region spans residues 173-236; that stretch reads NHTSPAMETD…NLYDLADFNH (64 aa). A substrate-binding site is contributed by His-174. Residue Ile-224 participates in Ca(2+) binding. 227–230 serves as a coordination point for substrate; that stretch reads NLYD. Asp-233 is a Ca(2+) binding site. The A2 stretch occupies residues 237-440; sequence NNATIDKYFK…LRKSNPAIAY (204 aa). Substrate is bound at residue Arg-261. Residue Asp-263 is the Nucleophile of the active site. 266–267 is a binding site for substrate; the sequence is KH. A Ca(2+)-binding site is contributed by His-267. Glu-291 functions as the Proton donor in the catalytic mechanism. Substrate is bound by residues His-361, Asp-405, and Arg-409. A c region spans residues 441 to 528; the sequence is GSTQQRWINN…ATAVWQYTAA (88 aa). Residues 529-614 are d; it reads ETTPTIGHVG…SNAYNHFTIL (86 aa). In terms of domain architecture, IPT/TIG spans 532–612; the sequence is PTIGHVGPVM…VNSNAYNHFT (81 aa). Residues 613 to 718 form the CBM20 domain; it reads ILTGDQVTVR…GTATVTVNWQ (106 aa). Positions 615 to 718 are e; sequence TGDQVTVRFV…GTATVTVNWQ (104 aa).

Belongs to the glycosyl hydrolase 13 family. In terms of assembly, monomer. Ca(2+) is required as a cofactor.

Its subcellular location is the secreted. The enzyme catalyses Cyclizes part of a (1-&gt;4)-alpha-D-glucan chain by formation of a (1-&gt;4)-alpha-D-glucosidic bond.. This chain is Cyclomaltodextrin glucanotransferase (cgt), found in Bacillus sp. (strain 6.6.3).